The following is a 355-amino-acid chain: Alanine racemase (355 aa).

K34 serves as the catalytic Proton acceptor; specific for D-alanine. Position 34 is an N6-(pyridoxal phosphate)lysine (K34). Position 133 (R133) interacts with substrate. Y249 functions as the Proton acceptor; specific for L-alanine in the catalytic mechanism. M297 contacts substrate.

The protein belongs to the alanine racemase family. Pyridoxal 5'-phosphate serves as cofactor.

The enzyme catalyses L-alanine = D-alanine. It functions in the pathway amino-acid biosynthesis; D-alanine biosynthesis; D-alanine from L-alanine: step 1/1. Catalyzes the interconversion of L-alanine and D-alanine. May also act on other amino acids. This Rickettsia conorii (strain ATCC VR-613 / Malish 7) protein is Alanine racemase (alr).